A 61-amino-acid polypeptide reads, in one-letter code: Small ribosomal subunit protein uS14 (61 aa).

The Zn(2+) site is built by Cys-24, Cys-27, Cys-40, and Cys-43.

This sequence belongs to the universal ribosomal protein uS14 family. Zinc-binding uS14 subfamily. As to quaternary structure, part of the 30S ribosomal subunit. Contacts proteins S3 and S10. Zn(2+) is required as a cofactor.

Functionally, binds 16S rRNA, required for the assembly of 30S particles and may also be responsible for determining the conformation of the 16S rRNA at the A site. The polypeptide is Small ribosomal subunit protein uS14 (Desulfitobacterium hafniense (strain Y51)).